The chain runs to 623 residues: Interferon-induced GTP-binding protein Mx3 (623 aa).

The Dynamin-type G domain maps to 31–304; that stretch reads DLALPAIAVI…LVHHIEKSLP (274 aa). The interval 41-48 is G1 motif; the sequence is GDQSSGKS. 41–48 lines the GTP pocket; sequence GDQSSGKS. Residues 66–68 are G2 motif; sequence VTR. A G3 motif region spans residues 142–145; that stretch reads DLPG. GTP contacts are provided by residues 142–146 and 211–214; these read DLPGI and TKPD. The segment at 211–214 is G4 motif; it reads TKPD. The interval 243 to 246 is G5 motif; the sequence is KCRG. The GED domain occupies 537-623; it reads LQEMMLHLKS…MKARSYLVEF (87 aa).

It belongs to the TRAFAC class dynamin-like GTPase superfamily. Dynamin/Fzo/YdjA family.

The protein localises to the cytoplasm. Its function is as follows. Does not inhibit strain RB-1 of the fish pathogen, infectious hematopoietic necrosis virus (IHNV). In Oncorhynchus mykiss (Rainbow trout), this protein is Interferon-induced GTP-binding protein Mx3.